A 554-amino-acid chain; its full sequence is Glucose-binding protein GlcS (554 aa).

The Cytoplasmic portion of the chain corresponds to 1 to 17; that stretch reads MKRKYPYSLAKGLTSTQ. The helical transmembrane segment at 18–38 threads the bilayer; sequence IAVIVAVIVIVIIIGVVAGFV. The Extracellular portion of the chain corresponds to 39-525; the sequence is LTKGPSTTAV…YGLTNNTQKT (487 aa). Residues 526 to 546 traverse the membrane as a helical segment; it reads SNSVMLFLLPFLALPLAIASI. The Cytoplasmic segment spans residues 547–554; sequence DNKYYLLK.

The protein belongs to the bacterial solute-binding protein 1 family. The complex is composed of two ATP-binding proteins (GlcV), two transmembrane proteins (GlcT and GlcU) and a solute-binding protein (GlcS).

It localises to the cell membrane. Its activity is regulated as follows. Binding of glucose is strongly inhibited by galactose and mannose. Functionally, part of the ABC transporter complex GlcSTUV involved in glucose uptake. Binds glucose. Can also bind galactose and mannose. The sequence is that of Glucose-binding protein GlcS from Saccharolobus solfataricus (strain ATCC 35092 / DSM 1617 / JCM 11322 / P2) (Sulfolobus solfataricus).